Consider the following 346-residue polypeptide: DNA-directed RNA polymerase subunit alpha (346 aa).

The segment at 1-242 (MLIQDGDKLI…DQLSVFINFD (242 aa)) is alpha N-terminal domain (alpha-NTD). The interval 258–346 (LNPNLFKSID…WLKRKEKNEA (89 aa)) is alpha C-terminal domain (alpha-CTD).

The protein belongs to the RNA polymerase alpha chain family. In terms of assembly, homodimer. The RNAP catalytic core consists of 2 alpha, 1 beta, 1 beta' and 1 omega subunit. When a sigma factor is associated with the core the holoenzyme is formed, which can initiate transcription.

The enzyme catalyses RNA(n) + a ribonucleoside 5'-triphosphate = RNA(n+1) + diphosphate. Functionally, DNA-dependent RNA polymerase catalyzes the transcription of DNA into RNA using the four ribonucleoside triphosphates as substrates. The chain is DNA-directed RNA polymerase subunit alpha from Maridesulfovibrio salexigens (strain ATCC 14822 / DSM 2638 / NCIMB 8403 / VKM B-1763) (Desulfovibrio salexigens).